We begin with the raw amino-acid sequence, 344 residues long: Acetylpolyamine amidohydrolase 2 (344 aa).

His159 acts as the Proton donor/acceptor in catalysis. Positions 195, 197, and 284 each coordinate Zn(2+).

This sequence belongs to the histone deacetylase family. Homodimer. It depends on Zn(2+) as a cofactor.

The enzyme catalyses N-acetylputrescine + H2O = putrescine + acetate. It catalyses the reaction N-acetylcadaverine + H2O = cadaverine + acetate. It participates in amine and polyamine metabolism. Its function is as follows. Catalyzes the deacetylation of acetylated polyamines such as N-acetylputrescine and N-acetylcadaverine. Plays an important role in the metabolism of acetylated polyamines in P.aeruginosa. Is involved in the degradation pathways of N-acetylputrescine and N-acetylcadaverine, that allow P.aeruginosa to utilize these acetylpolyamines as a carbon source under glucose starvation. Shows nearly no activity against N(1)-acetylspermine and N(1)-acetylspermidine. Can also hydrolyze artificial trifluoroacetylated lysine-derivative, and to a lesser extent, acetylated lysine-derivative. The sequence is that of Acetylpolyamine amidohydrolase 2 from Pseudomonas aeruginosa (strain ATCC 15692 / DSM 22644 / CIP 104116 / JCM 14847 / LMG 12228 / 1C / PRS 101 / PAO1).